Reading from the N-terminus, the 530-residue chain is Protein P80 (530 aa).

A signal peptide spans 1–22 (MKVISGLLFFILISCSLFLVQG). The helical transmembrane segment at 491–511 (MLVAMTFNVALFFAVIAGVLV) threads the bilayer.

Belongs to the SLC31A transporter family.

Its subcellular location is the late endosome membrane. The sequence is that of Protein P80 (p80) from Dictyostelium discoideum (Social amoeba).